The chain runs to 407 residues: MVSTLKRDEALFELIALEEKRQREGLELIASENFVSKQVREAVGSVLTNKYAEGYPGARYYGGCEAIDRVESLAIERAKALFGAAWANVQPHSGSQANMAVYMALMEPGDTLMGMDLAAGGHLTHGSRVNFSGKLYKVVSYGVRPDTELIDLEEVRRLALEHRPKVIVAGASAYPRFWDFKAFREIADEVGAYLVVDMAHFAGLVAAGLHPNPLPYAHVVTSTTHKTLRGPRGGLILSNDPELGKRIDKLIFPGIQGGPLEHVIAGKAVAFFEALQPEFKEYSRLVVENAKRLAEALARRGYRIVTGGTDNHLFLVDLRPKGLTGKEAEERLDAVGITVNKNAIPFDPKPPRVTSGIRIGTPAITTRGFTPEEMPLVAELIDRALLEGPSEALREEVRRLALAHPMP.

Residues Leu117 and 121 to 123 (GHL) each bind (6S)-5,6,7,8-tetrahydrofolate. Residue Lys226 is modified to N6-(pyridoxal phosphate)lysine. Glu242 contacts (6S)-5,6,7,8-tetrahydrofolate.

The protein belongs to the SHMT family. As to quaternary structure, homodimer. Pyridoxal 5'-phosphate serves as cofactor.

The protein localises to the cytoplasm. The enzyme catalyses (6R)-5,10-methylene-5,6,7,8-tetrahydrofolate + glycine + H2O = (6S)-5,6,7,8-tetrahydrofolate + L-serine. Its pathway is one-carbon metabolism; tetrahydrofolate interconversion. It participates in amino-acid biosynthesis; glycine biosynthesis; glycine from L-serine: step 1/1. Catalyzes the reversible interconversion of serine and glycine with tetrahydrofolate (THF) serving as the one-carbon carrier. This reaction serves as the major source of one-carbon groups required for the biosynthesis of purines, thymidylate, methionine, and other important biomolecules. Also exhibits THF-independent aldolase activity toward beta-hydroxyamino acids, producing glycine and aldehydes, via a retro-aldol mechanism. In Thermus thermophilus (strain ATCC BAA-163 / DSM 7039 / HB27), this protein is Serine hydroxymethyltransferase.